The chain runs to 940 residues: Isoleucine--tRNA ligase (940 aa).

The 'HIGH' region motif lies at 58 to 68 (PYANGDIHIGH). Position 564 (glutamate 564) interacts with L-isoleucyl-5'-AMP. The 'KMSKS' region motif lies at 605 to 609 (KMSKS). Lysine 608 serves as a coordination point for ATP. Cysteine 903, cysteine 906, cysteine 923, and cysteine 926 together coordinate Zn(2+).

Belongs to the class-I aminoacyl-tRNA synthetase family. IleS type 1 subfamily. As to quaternary structure, monomer. The cofactor is Zn(2+).

Its subcellular location is the cytoplasm. It catalyses the reaction tRNA(Ile) + L-isoleucine + ATP = L-isoleucyl-tRNA(Ile) + AMP + diphosphate. Its function is as follows. Catalyzes the attachment of isoleucine to tRNA(Ile). As IleRS can inadvertently accommodate and process structurally similar amino acids such as valine, to avoid such errors it has two additional distinct tRNA(Ile)-dependent editing activities. One activity is designated as 'pretransfer' editing and involves the hydrolysis of activated Val-AMP. The other activity is designated 'posttransfer' editing and involves deacylation of mischarged Val-tRNA(Ile). This chain is Isoleucine--tRNA ligase, found in Shewanella pealeana (strain ATCC 700345 / ANG-SQ1).